Here is a 381-residue protein sequence, read N- to C-terminus: tRNA pseudouridine synthase D (381 aa).

The active-site Nucleophile is the D81. The TRUD domain maps to 160 to 335; that stretch reads GMPNYFGSQR…TLGSRRFFWV (176 aa).

Belongs to the pseudouridine synthase TruD family.

It catalyses the reaction uridine(13) in tRNA = pseudouridine(13) in tRNA. Functionally, responsible for synthesis of pseudouridine from uracil-13 in transfer RNAs. The chain is tRNA pseudouridine synthase D from Helicobacter pylori (strain ATCC 700392 / 26695) (Campylobacter pylori).